We begin with the raw amino-acid sequence, 121 residues long: Large ribosomal subunit protein uL18 (121 aa).

It belongs to the universal ribosomal protein uL18 family. Part of the 50S ribosomal subunit; part of the 5S rRNA/L5/L18/L25 subcomplex. Contacts the 5S and 23S rRNAs.

Functionally, this is one of the proteins that bind and probably mediate the attachment of the 5S RNA into the large ribosomal subunit, where it forms part of the central protuberance. This chain is Large ribosomal subunit protein uL18, found in Pelobacter propionicus (strain DSM 2379 / NBRC 103807 / OttBd1).